We begin with the raw amino-acid sequence, 229 residues long: Ras-related protein Rab-33B (229 aa).

GTP is bound by residues N43, V44, G45, K46, T47, C48, T62, and T65. A Mg(2+)-binding site is contributed by T47. The Switch 1 signature appears at 56 to 68; the sequence is GRFPDRTEATIGV. Positions 65 and 88 each coordinate Mg(2+). The Switch 2 motif lies at 89–108; that stretch reads TAGQERFRKSMVQHYYRNVH. GTP is bound by residues G91, N148, K149, D151, A179, and K180. Residues C227 and C229 are each lipidated (S-geranylgeranyl cysteine). C229 is modified (cysteine methyl ester).

The protein belongs to the small GTPase superfamily. Rab family. Interacts (GTP- and GDP-bound forms) with ATG16L1; the complex consists of a tetramer where two RAB33B molecules bind independently one molecule of the ATG16L1 homodimer; the interaction promotes ATG12-ATG5-ATG16L1 complex recruitment to phagophores. Interacts with ATG16L2; however interaction is approximately hundred times lower than for ATG16L1. Interacts with RIC1 (via C-terminus domain); the interaction is direct with a preference for RAB33B-GTP. Interacts with RGP1. It depends on Mg(2+) as a cofactor. Prenylated.

It localises to the golgi apparatus membrane. The protein localises to the golgi apparatus. Its subcellular location is the cis-Golgi network. The protein resides in the preautophagosomal structure membrane. It carries out the reaction GTP + H2O = GDP + phosphate + H(+). With respect to regulation, regulated by guanine nucleotide exchange factors (GEFs) which promote the exchange of bound GDP for free GTP. Regulated by GTPase activating proteins (GAPs) such as SGSM2 which increase the GTP hydrolysis activity. Inhibited by GDP dissociation inhibitors (GDIs). In terms of biological role, the small GTPases Rab are key regulators of intracellular membrane trafficking, from the formation of transport vesicles to their fusion with membranes. Rabs cycle between an inactive GDP-bound form and an active GTP-bound form that is able to recruit to membranes different sets of downstream effectors directly responsible for vesicle formation, movement, tethering and fusion. RAB33B acts, in coordination with RAB6A, to regulate intra-Golgi retrograde trafficking. Participates in autophagosome formation by recruiting the ATG12-ATG5-ATG16L1 complex to phagophores, probably in a nucleotide-independent manner. This chain is Ras-related protein Rab-33B (RAB33B), found in Pongo abelii (Sumatran orangutan).